The sequence spans 681 residues: CAI-1 autoinducer sensor kinase/phosphatase CqsS (681 aa).

Helical transmembrane passes span 17–37, 73–93, 112–132, and 148–168; these read LVGW…EFMF, AYYQ…MLLM, ILLV…IGLA, and MDWT…LFYF. Residues 187 to 413 form the Histidine kinase domain; sequence GIAHEMRNPL…QFTMTFPTIG (227 aa). Residue H190 is modified to Phosphohistidine; by autocatalysis. The region spanning 564–681 is the Response regulatory domain; that stretch reads TIMVVDDNES…RLFDKIANWI (118 aa). A 4-aspartylphosphate modification is found at D613.

It is found in the cell membrane. The enzyme catalyses ATP + protein L-histidine = ADP + protein N-phospho-L-histidine.. Its function is as follows. Senses the quorum-sensing autoinducer CAI-1 ((S)-3-hydroxytridecan-4-one) which probably functions as an intragenus signal. The sensory signal is then relayed to LuxU and LuxO. This chain is CAI-1 autoinducer sensor kinase/phosphatase CqsS (cqsS), found in Vibrio campbellii (strain ATCC BAA-1116).